Here is a 341-residue protein sequence, read N- to C-terminus: Radial spoke head 14 homolog (341 aa).

ARM repeat units follow at residues 16–55, 57–96, 99–138, 139–178, 180–217, 219–258, 260–300, and 302–339; these read PTKA…DLMH, PEYV…IMAT, VGRV…LAQL, PKGA…LCLQ, DATE…AISI, LDGK…HATV, TEGK…MLAE, and PEGR…VIEW.

It belongs to the flagellar radial spoke RSP14 family. As to quaternary structure, component of the axonemal radial spoke complex 1 (RS1), at least composed of spoke head proteins RSPH1, RSPH3, RSPH9 and the cilia-specific component RSPH4A or sperm-specific component RSPH6A, spoke stalk proteins RSPH14, DNAJB13, DYDC1, ROPN1L and NME5, and the anchor protein IQUB.

The protein localises to the cytoplasm. The protein resides in the cytoskeleton. Its subcellular location is the flagellum axoneme. Functions as part of axonemal radial spoke complexes that play an important part in the motility of sperm and cilia. In Mus musculus (Mouse), this protein is Radial spoke head 14 homolog.